We begin with the raw amino-acid sequence, 259 residues long: Glandular kallikrein-10 (259 aa).

The first 18 residues, 1-18 (MWFLILFLALSLGGIDAA), serve as a signal peptide directing secretion. Positions 19-24 (PPGQSR) are cleaved as a propeptide — activation peptide. One can recognise a Peptidase S1 domain in the interval 25 to 256 (IVGGYKCEKN…FTSWIKEVMK (232 aa)). 5 disulfides stabilise this stretch: Cys31/Cys171, Cys48/Cys64, Cys150/Cys217, Cys182/Cys196, and Cys207/Cys232. Residue His63 is the Charge relay system of the active site. Asn91 and Asn106 each carry an N-linked (GlcNAc...) asparagine glycan. Catalysis depends on Asp118, which acts as the Charge relay system. Catalysis depends on Ser211, which acts as the Charge relay system.

It belongs to the peptidase S1 family. Kallikrein subfamily. In terms of assembly, heterodimer of a light chain and heavy chain linked by a disulfide bond. Post-translationally, probably N- and O-glycosylated. Kidney and submandibular gland, where it is found in the granular convoluted tubule and striated duct cells. It is likely that the enzyme is mainly synthesized in the granular convoluted tubules and then transferred to other tissues by release into the vasculature or interstitial space.

It catalyses the reaction Preferential cleavage of Arg-|-Xaa bonds in small molecule substrates. Highly selective action to release kallidin (lysyl-bradykinin) from kininogen involves hydrolysis of Met-|-Xaa or Leu-|-Xaa.. In terms of biological role, glandular kallikreins cleave Met-Lys and Arg-Ser bonds in kininogen to release Lys-bradykinin. This protein may be involved in the regulation of renal function. The protein is Glandular kallikrein-10 (Klk10) of Rattus norvegicus (Rat).